Here is a 501-residue protein sequence, read N- to C-terminus: Cytochrome P450 monooxygenase 76AD131 (501 aa).

A helical transmembrane segment spans residues 1-21 (MGYYAIFAVVLPFLWTCFYLL). 2 N-linked (GlcNAc...) asparagine glycosylation sites follow: N115 and N264. C444 contributes to the heme binding site.

This sequence belongs to the cytochrome P450 family. Requires heme as cofactor. In terms of tissue distribution, highly expressed in aerial parts, in both skin and flesh tissues.

The protein resides in the membrane. The enzyme catalyses tyramine + reduced [NADPH--hemoprotein reductase] + O2 = dopamine + oxidized [NADPH--hemoprotein reductase] + H2O + H(+). It catalyses the reaction 3-methoxytyramine + reduced [NADPH--hemoprotein reductase] + O2 = 3,4-dihydroxy-5-methoxyphenethylamine + oxidized [NADPH--hemoprotein reductase] + H2O + H(+). It functions in the pathway aromatic compound metabolism. Its pathway is alkaloid biosynthesis. Its function is as follows. Cytochrome P450 monooxygenase participating in the biosynthesis of natural products derived from phenylethylamine, including mescaline, a natural hallucinogen potentially used in psychotherapeutic treatments. Catalyzes the hydroxylation of tyramine to dopamine and of 3-methoxytyramine to 3,4-dihydroxy-5-methoxyphenethylamine. The sequence is that of Cytochrome P450 monooxygenase 76AD131 from Lophophora williamsii (Peyote).